Reading from the N-terminus, the 331-residue chain is Adenine deaminase (331 aa).

Zn(2+)-binding residues include His17, His19, and His197. The active-site Proton donor is Glu200. Asp278 contributes to the Zn(2+) binding site. Residue Asp279 participates in substrate binding.

The protein belongs to the metallo-dependent hydrolases superfamily. Adenosine and AMP deaminases family. Adenine deaminase type 2 subfamily. It depends on Zn(2+) as a cofactor.

The catalysed reaction is adenine + H2O + H(+) = hypoxanthine + NH4(+). In terms of biological role, catalyzes the hydrolytic deamination of adenine to hypoxanthine. Plays an important role in the purine salvage pathway and in nitrogen catabolism. The polypeptide is Adenine deaminase (Wolinella succinogenes (strain ATCC 29543 / DSM 1740 / CCUG 13145 / JCM 31913 / LMG 7466 / NCTC 11488 / FDC 602W) (Vibrio succinogenes)).